A 430-amino-acid polypeptide reads, in one-letter code: Glutamine synthetase leaf isozyme, chloroplastic (430 aa).

The N-terminal 49 residues, 1–49, are a transit peptide targeting the chloroplast; that stretch reads MAQILAPSTQWQMRITKTSPCATPITSKMWSSLVMKQTKKVAHSAKFRV. The 81-residue stretch at 77–157 folds into the GS beta-grasp domain; that stretch reads IIAEYIWIGG…VVCDAYTPAG (81 aa). The tract at residues 99–119 is disordered; sequence SKPVSHPSEVPKWNYDGSSTG. Residues 161-430 enclose the GS catalytic domain; sequence PTNKRHRAAE…LAAQKIALKV (270 aa).

This sequence belongs to the glutamine synthetase family. In terms of assembly, homooctamer.

It localises to the plastid. Its subcellular location is the chloroplast. It catalyses the reaction L-glutamate + NH4(+) + ATP = L-glutamine + ADP + phosphate + H(+). Functionally, the light-modulated chloroplast enzyme, encoded by a nuclear gene and expressed primarily in leaves, is responsible for the reassimilation of the ammonia generated by photorespiration. The sequence is that of Glutamine synthetase leaf isozyme, chloroplastic (GS2) from Pisum sativum (Garden pea).